A 681-amino-acid polypeptide reads, in one-letter code: Chaperone protein HtpG (681 aa).

Residues Met-1–Arg-326 form an a; substrate-binding region. The segment at Ser-327–Asn-545 is b. Residues Ile-546–Ile-681 form a c region. Residues Asp-601–Lys-620 form a disordered region.

The protein belongs to the heat shock protein 90 family. As to quaternary structure, homodimer.

Its subcellular location is the cytoplasm. Functionally, molecular chaperone. Has ATPase activity. The sequence is that of Chaperone protein HtpG from Bacteroides fragilis (strain ATCC 25285 / DSM 2151 / CCUG 4856 / JCM 11019 / LMG 10263 / NCTC 9343 / Onslow / VPI 2553 / EN-2).